The following is a 241-amino-acid chain: tRNA (guanine-N(7)-)-methyltransferase B (241 aa).

S-adenosyl-L-methionine-binding residues include glycine 61, glutamate 84, arginine 86, asparagine 117, alanine 118, and leucine 137. Aspartate 140 is a catalytic residue. Residues 141 to 149 form an alphaC helix region; that stretch reads PHFKKTKHK. S-adenosyl-L-methionine contacts are provided by threonine 215 and glutamate 217. The segment at 215 to 223 is alpha6 helix; it reads TEEGKKVQR.

The protein belongs to the class I-like SAM-binding methyltransferase superfamily. TrmB family. As to quaternary structure, catalytic component of the METTL1-WDR4 complex, composed of mettl1 and wdr4.

It localises to the nucleus. It carries out the reaction guanosine(46) in tRNA + S-adenosyl-L-methionine = N(7)-methylguanosine(46) in tRNA + S-adenosyl-L-homocysteine. The catalysed reaction is a guanosine in mRNA + S-adenosyl-L-methionine = an N(7)-methylguanosine in mRNA + S-adenosyl-L-homocysteine. It catalyses the reaction a guanosine in miRNA + S-adenosyl-L-methionine = an N(7)-methylguanosine in miRNA + S-adenosyl-L-homocysteine. It participates in tRNA modification; N(7)-methylguanine-tRNA biosynthesis. In terms of biological role, catalytic component of METTL1-WDR4 methyltransferase complex that mediates the formation of N(7)-methylguanine in a subset of RNA species, such as tRNAs, mRNAs and microRNAs (miRNAs). Catalyzes the formation of N(7)-methylguanine at position 46 (m7G46) in a large subset of tRNAs that contain the 5'-RAGGU-3' motif within the variable loop. M7G46 interacts with C13-G22 in the D-loop to stabilize tRNA tertiary structure and protect tRNAs from decay. Also acts as a methyltransferase for a subset of internal N(7)-methylguanine in mRNAs. Internal N(7)-methylguanine methylation of mRNAs in response to stress promotes their relocalization to stress granules, thereby suppressing their translation. Also methylates a specific subset of miRNAs. This is tRNA (guanine-N(7)-)-methyltransferase B (mettl1-B) from Xenopus tropicalis (Western clawed frog).